The sequence spans 121 residues: Large ribosomal subunit protein bL12 (121 aa).

Belongs to the bacterial ribosomal protein bL12 family. As to quaternary structure, homodimer. Part of the ribosomal stalk of the 50S ribosomal subunit. Forms a multimeric L10(L12)X complex, where L10 forms an elongated spine to which 2 to 4 L12 dimers bind in a sequential fashion. Binds GTP-bound translation factors.

Forms part of the ribosomal stalk which helps the ribosome interact with GTP-bound translation factors. Is thus essential for accurate translation. The polypeptide is Large ribosomal subunit protein bL12 (Pseudomonas syringae pv. tomato (strain ATCC BAA-871 / DC3000)).